We begin with the raw amino-acid sequence, 376 residues long: Chaperone protein DnaJ (376 aa).

Positions 5–70 (DFYEVLGVGR…DKKAAYDQFG (66 aa)) constitute a J domain. A CR-type zinc finger spans residues 132 to 210 (GLSKELRIPT…CHGEGRVEKS (79 aa)). Positions 145, 148, 162, 165, 184, 187, 198, and 201 each coordinate Zn(2+). 4 CXXCXGXG motif repeats span residues 145-152 (CEPCDGSG), 162-169 (CGTCHGQG), 184-191 (CPTCHGRG), and 198-205 (CNKCHGEG).

Belongs to the DnaJ family. Homodimer. Zn(2+) serves as cofactor.

The protein resides in the cytoplasm. Participates actively in the response to hyperosmotic and heat shock by preventing the aggregation of stress-denatured proteins and by disaggregating proteins, also in an autonomous, DnaK-independent fashion. Unfolded proteins bind initially to DnaJ; upon interaction with the DnaJ-bound protein, DnaK hydrolyzes its bound ATP, resulting in the formation of a stable complex. GrpE releases ADP from DnaK; ATP binding to DnaK triggers the release of the substrate protein, thus completing the reaction cycle. Several rounds of ATP-dependent interactions between DnaJ, DnaK and GrpE are required for fully efficient folding. Also involved, together with DnaK and GrpE, in the DNA replication of plasmids through activation of initiation proteins. This Shewanella piezotolerans (strain WP3 / JCM 13877) protein is Chaperone protein DnaJ.